A 359-amino-acid polypeptide reads, in one-letter code: Molybdenum import ATP-binding protein ModC (359 aa).

The ABC transporter domain occupies 1–236 (MNTEIKARFR…IDLPAAFADD (236 aa)). 34–41 (GHSGSGKT) contacts ATP. Positions 294 to 359 (QSSILNCVSA…AQIKAVALLA (66 aa)) constitute a Mop domain.

This sequence belongs to the ABC transporter superfamily. Molybdate importer (TC 3.A.1.8) family. As to quaternary structure, the complex is composed of two ATP-binding proteins (ModC), two transmembrane proteins (ModB) and a solute-binding protein (ModA).

It localises to the cell inner membrane. The catalysed reaction is molybdate(out) + ATP + H2O = molybdate(in) + ADP + phosphate + H(+). Its function is as follows. Part of the ABC transporter complex ModABC involved in molybdenum import. Responsible for energy coupling to the transport system. This is Molybdenum import ATP-binding protein ModC from Dechloromonas aromatica (strain RCB).